The chain runs to 830 residues: Phenylalanine--tRNA ligase beta subunit (830 aa).

The tRNA-binding domain occupies 39–158; it reads GQSLDGVVVG…DDTPVGTPFP (120 aa). The 76-residue stretch at 417–492 folds into the B5 domain; sequence PAEKTIALRP…RLHGYDQIPE (76 aa). The Mg(2+) site is built by Asp470, Asp476, Glu479, and Glu480. The segment at 490-510 is disordered; it reads IPEPERVPVPSRTPEQPPEET. The 93-residue stretch at 736–828 folds into the FDX-ACB domain; that stretch reads SRFPVVDRDL…LAENHGARLR (93 aa).

It belongs to the phenylalanyl-tRNA synthetase beta subunit family. Type 1 subfamily. As to quaternary structure, tetramer of two alpha and two beta subunits. Mg(2+) is required as a cofactor.

The protein localises to the cytoplasm. It carries out the reaction tRNA(Phe) + L-phenylalanine + ATP = L-phenylalanyl-tRNA(Phe) + AMP + diphosphate + H(+). This is Phenylalanine--tRNA ligase beta subunit from Salinibacter ruber (strain DSM 13855 / M31).